The sequence spans 597 residues: Elongation factor 4 (597 aa).

Residues 2-184 (KHIRNFSIIA…TIVKCIPAPE (183 aa)) form the tr-type G domain. GTP-binding positions include 14 to 19 (DHGKST) and 131 to 134 (NKID).

This sequence belongs to the TRAFAC class translation factor GTPase superfamily. Classic translation factor GTPase family. LepA subfamily.

It is found in the cell inner membrane. The catalysed reaction is GTP + H2O = GDP + phosphate + H(+). In terms of biological role, required for accurate and efficient protein synthesis under certain stress conditions. May act as a fidelity factor of the translation reaction, by catalyzing a one-codon backward translocation of tRNAs on improperly translocated ribosomes. Back-translocation proceeds from a post-translocation (POST) complex to a pre-translocation (PRE) complex, thus giving elongation factor G a second chance to translocate the tRNAs correctly. Binds to ribosomes in a GTP-dependent manner. This is Elongation factor 4 from Aliivibrio salmonicida (strain LFI1238) (Vibrio salmonicida (strain LFI1238)).